Here is a 534-residue protein sequence, read N- to C-terminus: High affinity cGMP-specific 3',5'-cyclic phosphodiesterase 9A (534 aa).

The 322-residue stretch at 175–496 folds into the PDEase domain; it reads PRRDVPTYPK…EHYEELKQLD (322 aa). The Proton donor role is filled by His-251. 251–255 lines the 3',5'-cyclic GMP pocket; the sequence is HNFRH. Zn(2+)-binding residues include His-255, His-291, and Asp-292. A 3',5'-cyclic GMP-binding site is contributed by Asp-292. Residue Asp-292 participates in Mg(2+) binding. Residue Ser-318 is modified to Phosphoserine. 3',5'-cyclic GMP-binding positions include Asp-401, Tyr-423, and 451-452; that span reads AQ. Position 401 (Asp-401) interacts with Zn(2+). Positions 500 to 534 are disordered; the sequence is KELQKKTESLTSGAPENTTEKNRDAKDSEGHSPPN. Residues 517–534 show a composition bias toward basic and acidic residues; the sequence is TTEKNRDAKDSEGHSPPN.

This sequence belongs to the cyclic nucleotide phosphodiesterase family. PDE9 subfamily. In terms of assembly, homodimer. Requires Zn(2+) as cofactor. It depends on Mg(2+) as a cofactor. As to expression, highly expressed in kidney. Lower levels in liver, lung and brain. Widely expressed in brain, with highest expression in cerebellar Purkinje cells. Present in heart (at protein level).

The protein resides in the cell projection. The protein localises to the ruffle membrane. It is found in the cytoplasm. Its subcellular location is the perinuclear region. It localises to the golgi apparatus. The protein resides in the endoplasmic reticulum. The protein localises to the cell membrane. It is found in the sarcolemma. The enzyme catalyses 3',5'-cyclic GMP + H2O = GMP + H(+). Its pathway is purine metabolism; 3',5'-cyclic GMP degradation; GMP from 3',5'-cyclic GMP: step 1/1. With respect to regulation, inhibited by SCH 51866 and moderately, by zaprinast. Specifically inhibited by PF-04447943 (6-[(3S,4S)-4-methyl-1-(pyrimidin-2-ylmethyl)pyrrolidin-3-yl]-1-(tetrahydro-2H-pyran-4-yl)-1,5-dihydro-4H-pyrazolo[3,4-d]pyrimidin-4-one). Specifically hydrolyzes the second messenger cGMP, which is a key regulator of many important physiological processes. Highly specific: compared to other members of the cyclic nucleotide phosphodiesterase family, has the highest affinity and selectivity for cGMP. Specifically regulates natriuretic-peptide-dependent cGMP signaling in heart, acting as a regulator of cardiac hypertrophy in myocytes and muscle. Does not regulate nitric oxide-dependent cGMP in heart. Additional experiments are required to confirm whether its ability to hydrolyze natriuretic-peptide-dependent cGMP is specific to heart or is a general feature of the protein. In brain, involved in cognitive function, such as learning and long-term memory. This Mus musculus (Mouse) protein is High affinity cGMP-specific 3',5'-cyclic phosphodiesterase 9A (Pde9a).